A 197-amino-acid polypeptide reads, in one-letter code: ATP-dependent Clp protease proteolytic subunit 1 (197 aa).

Catalysis depends on Ser99, which acts as the Nucleophile. Residue His124 is part of the active site.

The protein belongs to the peptidase S14 family. As to quaternary structure, fourteen ClpP subunits assemble into 2 heptameric rings which stack back to back to give a disk-like structure with a central cavity, resembling the structure of eukaryotic proteasomes.

It localises to the cytoplasm. It catalyses the reaction Hydrolysis of proteins to small peptides in the presence of ATP and magnesium. alpha-casein is the usual test substrate. In the absence of ATP, only oligopeptides shorter than five residues are hydrolyzed (such as succinyl-Leu-Tyr-|-NHMec, and Leu-Tyr-Leu-|-Tyr-Trp, in which cleavage of the -Tyr-|-Leu- and -Tyr-|-Trp bonds also occurs).. Cleaves peptides in various proteins in a process that requires ATP hydrolysis. Has a chymotrypsin-like activity. Plays a major role in the degradation of misfolded proteins. The sequence is that of ATP-dependent Clp protease proteolytic subunit 1 from Treponema denticola (strain ATCC 35405 / DSM 14222 / CIP 103919 / JCM 8153 / KCTC 15104).